The sequence spans 156 residues: Endoribonuclease YbeY (156 aa).

Zn(2+)-binding residues include His-117, His-121, and His-127.

It belongs to the endoribonuclease YbeY family. It depends on Zn(2+) as a cofactor.

The protein localises to the cytoplasm. Its function is as follows. Single strand-specific metallo-endoribonuclease involved in late-stage 70S ribosome quality control and in maturation of the 3' terminus of the 16S rRNA. This is Endoribonuclease YbeY from Shewanella halifaxensis (strain HAW-EB4).